A 353-amino-acid polypeptide reads, in one-letter code: Trans-enoyl reductase fsa3 (353 aa).

Residue 45 to 48 (VDTK) coordinates NADP(+). A substrate-binding site is contributed by 131–138 (ISFMTTGL). NADP(+)-binding positions include 166-169 (SSAT), 189-192 (SPRN), Tyr207, and 254-255 (LE). A substrate-binding site is contributed by 275 to 279 (GPQML). 344 to 345 (IS) is a binding site for NADP(+).

Belongs to the zinc-containing alcohol dehydrogenase family. In terms of assembly, monomer.

It catalyses the reaction L-serine + 7 malonyl-CoA + acetyl-CoA + 2 S-adenosyl-L-methionine + ATP + 8 NADPH + 11 H(+) = (5S)-3-[(2E,6R,8E,10E,12E)-2,6-dimethyltetradeca-2,8,10,12-tetraenoyl]-5-(hydroxymethyl)pyrrolidine-2,4-dione + AMP + 2 S-adenosyl-L-homocysteine + 7 CO2 + diphosphate + 8 NADP(+) + 8 CoA + 6 H2O. It participates in mycotoxin biosynthesis. Its function is as follows. Trans-enoyl reductase; part of the gene cluster that mediates the biosynthesis of HIV-1 integrase inhibitor equisetin and of fusarisetin A, both trans-fused decalin-containing tetramic acids showing also antimicrobial activity. The PKS module of fsa1 together with the enoylreductase fsa3 catalyze the formation of the polyketide unit which is then conjugated to L-serine by the condensation domain of the fsa1 NRPS module. Activity of the Dieckmann cyclase domain (RED) results in release of the Dieckmann product intermediate. Diels-Alderase fsa2 is involved in endo-selective Diels-Alder cycloaddition to form the decalin ring, leading to the production of N-desmethylequisetin also called trichosetin. Subsequent N-methylation is carried out by fsa4 to give equisetin. The enzymatic gene responsible for the conversion of equisetin to fusarisetin A has not been identified yet and is probably located outside of the fsa cluster. In Fusarium sp. (strain FN080326), this protein is Trans-enoyl reductase fsa3.